We begin with the raw amino-acid sequence, 75 residues long: Small ribosomal subunit protein bS18 (75 aa).

Belongs to the bacterial ribosomal protein bS18 family. Part of the 30S ribosomal subunit. Forms a tight heterodimer with protein bS6.

Functionally, binds as a heterodimer with protein bS6 to the central domain of the 16S rRNA, where it helps stabilize the platform of the 30S subunit. This is Small ribosomal subunit protein bS18 from Vibrio atlanticus (strain LGP32) (Vibrio splendidus (strain Mel32)).